The sequence spans 127 residues: Protein ApaG (127 aa).

Positions 3-127 (DDPRYRVEVE…FVLSVPRTLH (125 aa)) constitute an ApaG domain.

This is Protein ApaG from Xanthomonas campestris pv. campestris (strain 8004).